A 90-amino-acid chain; its full sequence is Small ribosomal subunit protein bS20 (90 aa).

The tract at residues 1–27 (MANSAQAKKRARQNEKRELHNASQRSA) is disordered.

The protein belongs to the bacterial ribosomal protein bS20 family.

Binds directly to 16S ribosomal RNA. This chain is Small ribosomal subunit protein bS20, found in Coxiella burnetii (strain CbuK_Q154) (Coxiella burnetii (strain Q154)).